Reading from the N-terminus, the 676-residue chain is DNA ligase (676 aa).

NAD(+)-binding positions include 34-38, 83-84, and Glu117; these read DQEFD and SL. Lys119 acts as the N6-AMP-lysine intermediate in catalysis. The NAD(+) site is built by Arg140, Glu177, Lys285, and Lys309. 4 residues coordinate Zn(2+): Cys403, Cys406, Cys427, and Cys434. Residues 595–676 form the BRCT domain; the sequence is NNNGLLKNKT…EWLKMLNKSG (82 aa).

It belongs to the NAD-dependent DNA ligase family. LigA subfamily. The cofactor is Mg(2+). It depends on Mn(2+) as a cofactor.

The enzyme catalyses NAD(+) + (deoxyribonucleotide)n-3'-hydroxyl + 5'-phospho-(deoxyribonucleotide)m = (deoxyribonucleotide)n+m + AMP + beta-nicotinamide D-nucleotide.. In terms of biological role, DNA ligase that catalyzes the formation of phosphodiester linkages between 5'-phosphoryl and 3'-hydroxyl groups in double-stranded DNA using NAD as a coenzyme and as the energy source for the reaction. It is essential for DNA replication and repair of damaged DNA. The chain is DNA ligase from Pelagibacter ubique (strain HTCC1062).